The primary structure comprises 698 residues: Probable xyloglucan glycosyltransferase 2 (698 aa).

The next 2 helical transmembrane spans lie at 124-144 (GFLA…WNGW) and 190-210 (ILLF…CFWI). Aspartate 272 is an active-site residue. Substrate contacts are provided by aspartate 331 and aspartate 333. Aspartate 425 is an active-site residue. 4 helical membrane-spanning segments follow: residues 503–523 (LILP…TMFV), 528–548 (LPVW…ILPS), 653–668 (LALS…RSLL), and 673–693 (IHFY…LDLI).

Belongs to the glycosyltransferase 2 family. Plant cellulose synthase-like C subfamily.

The protein localises to the golgi apparatus membrane. In terms of biological role, probable beta-1,4-glucan synthase rather involved in the synthesis of the xyloglucan backbone than cellulose. Seems to work simultaneously with xyloglucan 6-xylosyltransferase. Xyloglucan is a noncellulosic polysaccharides of plant cell wall and consists of a glucan backbone substituted by xylose, galactose and fucose. The sequence is that of Probable xyloglucan glycosyltransferase 2 (CSLC2) from Oryza sativa subsp. japonica (Rice).